The primary structure comprises 65 residues: Large ribosomal subunit protein bL35 (65 aa).

The tract at residues 1–28 (MPKMKTHRGAAKRFKKTGTGKIKRGQSK) is disordered.

Belongs to the bacterial ribosomal protein bL35 family.

This is Large ribosomal subunit protein bL35 from Acidobacterium capsulatum (strain ATCC 51196 / DSM 11244 / BCRC 80197 / JCM 7670 / NBRC 15755 / NCIMB 13165 / 161).